Consider the following 328-residue polypeptide: Tryptophan--tRNA ligase (328 aa).

Residues 11–13 (QPT) and 19–20 (GN) each bind ATP. A 'HIGH' region motif is present at residues 12–20 (PTGNIHLGN). D135 is an L-tryptophan binding site. ATP contacts are provided by residues 147-149 (GED), I186, and 195-199 (KMSKS). Positions 195 to 199 (KMSKS) match the 'KMSKS' region motif.

This sequence belongs to the class-I aminoacyl-tRNA synthetase family. As to quaternary structure, homodimer.

Its subcellular location is the cytoplasm. The catalysed reaction is tRNA(Trp) + L-tryptophan + ATP = L-tryptophyl-tRNA(Trp) + AMP + diphosphate + H(+). In terms of biological role, catalyzes the attachment of tryptophan to tRNA(Trp). The sequence is that of Tryptophan--tRNA ligase from Wolinella succinogenes (strain ATCC 29543 / DSM 1740 / CCUG 13145 / JCM 31913 / LMG 7466 / NCTC 11488 / FDC 602W) (Vibrio succinogenes).